A 107-amino-acid chain; its full sequence is L-rhamnose mutarotase (107 aa).

Residue Tyr-21 participates in substrate binding. The active-site Proton donor is the His-25. Residues Tyr-44 and 79-80 contribute to the substrate site; that span reads WW.

This sequence belongs to the rhamnose mutarotase family. As to quaternary structure, homodimer.

It is found in the cytoplasm. It carries out the reaction alpha-L-rhamnose = beta-L-rhamnose. It functions in the pathway carbohydrate metabolism; L-rhamnose metabolism. Its function is as follows. Involved in the anomeric conversion of L-rhamnose. The polypeptide is L-rhamnose mutarotase (Agrobacterium fabrum (strain C58 / ATCC 33970) (Agrobacterium tumefaciens (strain C58))).